The chain runs to 291 residues: MELIIATRKSKLAQVQTEKVMELLKKKENVDSKKLLVMTEGDRRLDVSLNKIGGKGLFVKEIELALLNKEAHGAVHSMKDVPFELPSEFELVAMPEREDIRDAFVSLNGSTLSNLRKGARIGTSSIRRAEQLKLFRDDLEIVPIRGNVQTRIKKITEENLDGIILAAAGLKRLGMEDVISDYFDPKVFLPAIGQGALGIECLKDGEFNDYFKALDSKEVRTTVEAERSFMKVLNGGCHSLIGAYSEVKDNDLYMIGTFTVNNRIVKKDILGNKEDNILLGKKLAEKILGEV.

Cysteine 237 is subject to S-(dipyrrolylmethanemethyl)cysteine.

Belongs to the HMBS family. As to quaternary structure, monomer. It depends on dipyrromethane as a cofactor.

The catalysed reaction is 4 porphobilinogen + H2O = hydroxymethylbilane + 4 NH4(+). Its pathway is porphyrin-containing compound metabolism; protoporphyrin-IX biosynthesis; coproporphyrinogen-III from 5-aminolevulinate: step 2/4. Functionally, tetrapolymerization of the monopyrrole PBG into the hydroxymethylbilane pre-uroporphyrinogen in several discrete steps. This chain is Porphobilinogen deaminase, found in Clostridium perfringens (strain SM101 / Type A).